Here is a 231-residue protein sequence, read N- to C-terminus: LexA repressor (231 aa).

A DNA-binding region (H-T-H motif) is located at residues 26 to 46; it reads FDEMKDALDLRSKSGIHRLIT. Catalysis depends on for autocatalytic cleavage activity residues serine 152 and lysine 190.

It belongs to the peptidase S24 family. In terms of assembly, homodimer.

It catalyses the reaction Hydrolysis of Ala-|-Gly bond in repressor LexA.. Functionally, represses a number of genes involved in the response to DNA damage (SOS response), including recA and lexA. In the presence of single-stranded DNA, RecA interacts with LexA causing an autocatalytic cleavage which disrupts the DNA-binding part of LexA, leading to derepression of the SOS regulon and eventually DNA repair. The sequence is that of LexA repressor from Dinoroseobacter shibae (strain DSM 16493 / NCIMB 14021 / DFL 12).